Reading from the N-terminus, the 294-residue chain is Nucleotide-binding protein CPF_0343 (294 aa).

8-15 provides a ligand contact to ATP; it reads GLSGAGKT. 59-62 serves as a coordination point for GTP; sequence DIRG.

This sequence belongs to the RapZ-like family.

Functionally, displays ATPase and GTPase activities. The polypeptide is Nucleotide-binding protein CPF_0343 (Clostridium perfringens (strain ATCC 13124 / DSM 756 / JCM 1290 / NCIMB 6125 / NCTC 8237 / Type A)).